The chain runs to 219 residues: Glutathione S-transferase 3 (219 aa).

One can recognise a GST N-terminal domain in the interval 3 to 82 (DEVVLLDTWA…YIDEVWNDKS (80 aa)). Glutathione contacts are provided by residues Ser-13, Ile-54, and 66 to 67 (ES). Residues 88–216 (DPYKRSQARF…GLIVELQKTL (129 aa)) form the GST C-terminal domain.

Belongs to the GST superfamily. HSP26 family. Homodimer. degradation; (R)-lactate from methylglyoxal: step 1/2.

The catalysed reaction is RX + glutathione = an S-substituted glutathione + a halide anion + H(+). Its function is as follows. Conjugation of reduced glutathione to a wide number of exogenous and endogenous hydrophobic electrophiles. Involved in the detoxification of certain herbicides. The chain is Glutathione S-transferase 3 (GST3) from Glycine max (Soybean).